Reading from the N-terminus, the 476-residue chain is Scopoletin glucosyltransferase (476 aa).

The active-site Proton acceptor is the H16. H16 lines the an anthocyanidin pocket. D119 acts as the Charge relay in catalysis. 7 residues coordinate UDP-alpha-D-glucose: A343, Q345, H360, W363, N364, S365, and E368. A383 is an an anthocyanidin binding site. The UDP-alpha-D-glucose site is built by E384 and Q385.

It belongs to the UDP-glycosyltransferase family.

The enzyme catalyses scopoletin + UDP-alpha-D-glucose = scopolin + UDP + H(+). Glucosyltransferase acting preferentially on aromatic substrates of the phenylpropanoid types. The best substrates are scopoletin and esculetin. Required for full resistance to virus. This chain is Scopoletin glucosyltransferase (TOGT1), found in Nicotiana tabacum (Common tobacco).